The sequence spans 1489 residues: DNA-directed RNA polymerase subunit beta (1489 aa).

Belongs to the RNA polymerase beta chain family. As to quaternary structure, the RNAP catalytic core consists of 2 alpha, 1 beta, 1 beta' and 1 omega subunit. When a sigma factor is associated with the core the holoenzyme is formed, which can initiate transcription.

The enzyme catalyses RNA(n) + a ribonucleoside 5'-triphosphate = RNA(n+1) + diphosphate. In terms of biological role, DNA-dependent RNA polymerase catalyzes the transcription of DNA into RNA using the four ribonucleoside triphosphates as substrates. The polypeptide is DNA-directed RNA polymerase subunit beta (Koribacter versatilis (strain Ellin345)).